We begin with the raw amino-acid sequence, 130 residues long: Large ribosomal subunit protein bL12 (130 aa).

The protein belongs to the bacterial ribosomal protein bL12 family. In terms of assembly, homodimer. Part of the ribosomal stalk of the 50S ribosomal subunit. Forms a multimeric L10(L12)X complex, where L10 forms an elongated spine to which 2 to 4 L12 dimers bind in a sequential fashion. Binds GTP-bound translation factors.

Forms part of the ribosomal stalk which helps the ribosome interact with GTP-bound translation factors. Is thus essential for accurate translation. This chain is Large ribosomal subunit protein bL12, found in Mycobacterium leprae (strain TN).